A 711-amino-acid chain; its full sequence is Polyribonucleotide nucleotidyltransferase (711 aa).

The Mg(2+) site is built by Asp-486 and Asp-492. A KH domain is found at 553 to 612; that stretch reads PRIHTIKINPDKIKDVIGKGGSVIRALTEETGTTIEIEDDGTVKIAATDGDKAQHAIRRI. Positions 622–690 constitute an S1 motif domain; the sequence is GRIYNGKVTR…RQGRVRLSIK (69 aa). A disordered region spans residues 689–711; it reads IKEATEQTPSAAAPEAPAAEQGE. Residues 694 to 711 are compositionally biased toward low complexity; sequence EQTPSAAAPEAPAAEQGE.

Belongs to the polyribonucleotide nucleotidyltransferase family. In terms of assembly, component of the RNA degradosome, which is a multiprotein complex involved in RNA processing and mRNA degradation. It depends on Mg(2+) as a cofactor.

Its subcellular location is the cytoplasm. The catalysed reaction is RNA(n+1) + phosphate = RNA(n) + a ribonucleoside 5'-diphosphate. In terms of biological role, involved in mRNA degradation. Catalyzes the phosphorolysis of single-stranded polyribonucleotides processively in the 3'- to 5'-direction. This is Polyribonucleotide nucleotidyltransferase from Klebsiella pneumoniae subsp. pneumoniae (strain ATCC 700721 / MGH 78578).